The sequence spans 246 residues: DNA repair protein RecO (246 aa).

The protein belongs to the RecO family.

In terms of biological role, involved in DNA repair and RecF pathway recombination. This chain is DNA repair protein RecO, found in Methylorubrum extorquens (strain CM4 / NCIMB 13688) (Methylobacterium extorquens).